The sequence spans 375 residues: Ribosomal RNA large subunit methyltransferase G (375 aa).

It belongs to the methyltransferase superfamily. RlmG family.

The protein resides in the cytoplasm. It catalyses the reaction guanosine(1835) in 23S rRNA + S-adenosyl-L-methionine = N(2)-methylguanosine(1835) in 23S rRNA + S-adenosyl-L-homocysteine + H(+). In terms of biological role, specifically methylates the guanine in position 1835 (m2G1835) of 23S rRNA. This Stutzerimonas stutzeri (strain A1501) (Pseudomonas stutzeri) protein is Ribosomal RNA large subunit methyltransferase G.